A 580-amino-acid chain; its full sequence is Arginine--tRNA ligase (580 aa).

The 'HIGH' region signature appears at 127 to 137 (PNTHKELHVGH).

It belongs to the class-I aminoacyl-tRNA synthetase family. Monomer.

The protein localises to the cytoplasm. It catalyses the reaction tRNA(Arg) + L-arginine + ATP = L-arginyl-tRNA(Arg) + AMP + diphosphate. This Bdellovibrio bacteriovorus (strain ATCC 15356 / DSM 50701 / NCIMB 9529 / HD100) protein is Arginine--tRNA ligase.